A 529-amino-acid chain; its full sequence is Arginine--tRNA ligase (529 aa).

Positions 113-123 (ANPTGPLHIGH) match the 'HIGH' region motif.

The protein belongs to the class-I aminoacyl-tRNA synthetase family. In terms of assembly, monomer.

The protein resides in the cytoplasm. The catalysed reaction is tRNA(Arg) + L-arginine + ATP = L-arginyl-tRNA(Arg) + AMP + diphosphate. The chain is Arginine--tRNA ligase from Campylobacter curvus (strain 525.92).